The following is a 271-amino-acid chain: ABC transporter I family member 10 (271 aa).

The ABC transporter domain occupies 40–267 (VECRNLCFSV…IKAKQSSYID (228 aa)). Position 77 to 84 (77 to 84 (GPNGCGKS)) interacts with ATP.

It belongs to the ABC transporter superfamily. ABCI family.

This Arabidopsis thaliana (Mouse-ear cress) protein is ABC transporter I family member 10 (ABCI10).